A 484-amino-acid polypeptide reads, in one-letter code: Aspartyl aminopeptidase (484 aa).

Met1 carries the N-acetylmethionine modification. Zn(2+) is bound at residue His84. Residue His159 coordinates substrate. A compositionally biased stretch (low complexity) spans 188-206 (PVESKSTTTTTTTESPKTS). The disordered stretch occupies residues 188-213 (PVESKSTTTTTTTESPKTSDPQDVNS). Asp266 is a binding site for Zn(2+). Glu301 is a binding site for substrate. The Zn(2+) site is built by Glu302 and Asp354. Positions 354, 357, 382, and 389 each coordinate substrate. His448 is a Zn(2+) binding site.

The protein belongs to the peptidase M18 family. Tetrahedron-shaped homododecamer built from six homodimers. Zn(2+) is required as a cofactor.

Its subcellular location is the cytoplasm. It catalyses the reaction Release of an N-terminal aspartate or glutamate from a peptide, with a preference for aspartate.. Its function is as follows. Likely to play an important role in intracellular protein and peptide metabolism. The polypeptide is Aspartyl aminopeptidase (dnpep) (Dictyostelium discoideum (Social amoeba)).